The primary structure comprises 874 residues: DNA primase (874 aa).

Residues 786–824 (CLRHTHRASSKNVRVFLVLYYTSQAITVTFMSQCFAGRC) form a CHC2-type zinc finger. Polar residues predominate over residues 848–857 (ASQDSTTSQL). The disordered stretch occupies residues 848-874 (ASQDSTTSQLARRRDRQDGSFSETLPN).

This sequence belongs to the herpesviridae DNA primase family. As to quaternary structure, associates with the helicase and the primase-associated factor to form the helicase-primase factor.

It localises to the host nucleus. In terms of biological role, essential component of the helicase/primase complex. Unwinds the DNA at the replication forks and generates single-stranded DNA for both leading and lagging strand synthesis. The primase initiates primer synthesis and thereby produces large amount of short RNA primers on the lagging strand that the polymerase elongates using dNTPs. The polypeptide is DNA primase (Epstein-Barr virus (strain B95-8) (HHV-4)).